The sequence spans 283 residues: Phospholipase C (283 aa).

The signal sequence occupies residues 1–24 (MKKKVLALAAAITVVAPLQSVAFA). The propeptide occupies 25-38 (HENDGGSKIKIVHR). W39, H52, D93, H107, H156, D160, H166, H180, and E184 together coordinate Zn(2+). Residues 39 to 283 (WSAEDKHKEG…QLWFDTYGDR (245 aa)) form the Zn-dependent PLC domain.

Belongs to the bacterial zinc-metallophospholipase C family. As to quaternary structure, monomer. Zn(2+) serves as cofactor.

The enzyme catalyses a 1,2-diacyl-sn-glycero-3-phosphocholine + H2O = phosphocholine + a 1,2-diacyl-sn-glycerol + H(+). Functionally, required, with sphingomyelinase, to effect target cell lysis (hemolysis). This Bacillus cereus protein is Phospholipase C (plc).